Here is a 321-residue protein sequence, read N- to C-terminus: Prephenate dehydratase (321 aa).

Positions 3-189 constitute a Prephenate dehydratase domain; it reads RIAYLGPEGT…ARTRFVLVGR (187 aa). The 78-residue stretch at 203–280 folds into the ACT domain; that stretch reads SAVLRIDNQP…ADVRYLGSWP (78 aa).

Homodimer.

It carries out the reaction prephenate + H(+) = 3-phenylpyruvate + CO2 + H2O. It participates in amino-acid biosynthesis; L-phenylalanine biosynthesis; phenylpyruvate from prephenate: step 1/1. In Mycobacterium bovis (strain ATCC BAA-935 / AF2122/97), this protein is Prephenate dehydratase (pheA).